We begin with the raw amino-acid sequence, 402 residues long: D-galactonate dehydratase family member EGBG_02030 (402 aa).

Mg(2+) is bound at residue aspartate 207. D-arabinonate is bound at residue histidine 209. Mg(2+)-binding residues include glutamate 233 and glutamate 259. D-arabinonate-binding residues include glutamate 259, arginine 280, histidine 309, and glutamate 336.

Belongs to the mandelate racemase/muconate lactonizing enzyme family. GalD subfamily.

Its function is as follows. Has no detectable activity with D-mannonate and with a panel of 70 other acid sugars (in vitro), in spite of the conservation of the residues that are expected to be important for catalytic activity and cofactor binding. May have evolved a divergent function. In Enterococcus gallinarum (strain EG2), this protein is D-galactonate dehydratase family member EGBG_02030.